A 274-amino-acid chain; its full sequence is NADH-ubiquinone oxidoreductase chain 2 (274 aa).

Transmembrane regions (helical) follow at residues 28-48 (MIIM…FWFP), 54-74 (LTWM…LMLI), 79-99 (IKYL…IGGL), 107-127 (LMAF…MFSE), 128-148 (SIWL…TFMF), 171-191 (FTLF…GFLP), 206-226 (FLLT…LRIC), and 254-274 (LIMT…YFMF).

The protein belongs to the complex I subunit 2 family.

The protein resides in the mitochondrion inner membrane. The catalysed reaction is a ubiquinone + NADH + 5 H(+)(in) = a ubiquinol + NAD(+) + 4 H(+)(out). Functionally, core subunit of the mitochondrial membrane respiratory chain NADH dehydrogenase (Complex I) that is believed to belong to the minimal assembly required for catalysis. Complex I functions in the transfer of electrons from NADH to the respiratory chain. The immediate electron acceptor for the enzyme is believed to be ubiquinone. This chain is NADH-ubiquinone oxidoreductase chain 2 (mt:ND2), found in Drosophila sechellia (Fruit fly).